Reading from the N-terminus, the 119-residue chain is Large ribosomal subunit protein uL18 (119 aa).

This sequence belongs to the universal ribosomal protein uL18 family. In terms of assembly, part of the 50S ribosomal subunit; part of the 5S rRNA/L5/L18/L25 subcomplex. Contacts the 5S and 23S rRNAs.

This is one of the proteins that bind and probably mediate the attachment of the 5S RNA into the large ribosomal subunit, where it forms part of the central protuberance. This Xanthomonas oryzae pv. oryzae (strain MAFF 311018) protein is Large ribosomal subunit protein uL18.